A 129-amino-acid polypeptide reads, in one-letter code: Glycine cleavage system H protein (129 aa).

Positions 23 to 104 constitute a Lipoyl-binding domain; that stretch reads TATIGITQHA…AYAAWLFRLK (82 aa). Position 64 is an N6-lipoyllysine (Lys64).

It belongs to the GcvH family. As to quaternary structure, the glycine cleavage system is composed of four proteins: P, T, L and H. Requires (R)-lipoate as cofactor.

The glycine cleavage system catalyzes the degradation of glycine. The H protein shuttles the methylamine group of glycine from the P protein to the T protein. This is Glycine cleavage system H protein from Nitrosospira multiformis (strain ATCC 25196 / NCIMB 11849 / C 71).